A 235-amino-acid chain; its full sequence is Transmembrane protein 215 (235 aa).

The next 2 helical transmembrane spans lie at 12-32 and 40-60; these read LVVALVSVFLVFGFMFTVSGM and IPLLAIGPAICLPGIAAIALA. Positions 99–158 are disordered; that stretch reads SDLESGKGSSDELAKKAGLRGKPSLQGQGELPMASSITTPTPMEEGECQSPGQSGRREET.

The protein resides in the membrane. The protein is Transmembrane protein 215 (TMEM215) of Bos taurus (Bovine).